Reading from the N-terminus, the 371-residue chain is GDP-mannose 3,5-epimerase 2 (371 aa).

NAD(+) is bound by residues 29 to 55 (GAGG…SDWK), D53, and D73. Substrate is bound by residues G98 and 138–140 (SAC). Positions 168 and 172 each coordinate NAD(+). The active-site Proton acceptor is Y168. Residues N197, 210-212 (EKA), K219, 235-237 (QTR), R300, and S350 contribute to the substrate site.

The protein belongs to the NAD(P)-dependent epimerase/dehydratase family. The cofactor is NAD(+).

It carries out the reaction GDP-alpha-D-mannose = GDP-beta-L-gulose. The catalysed reaction is GDP-beta-L-gulose = GDP-beta-L-galactose. It participates in cofactor biosynthesis; L-ascorbate biosynthesis via GDP-alpha-D-mannose pathway; L-ascorbate from GDP-alpha-D-mannose: step 1/5. Its function is as follows. Catalyzes a reversible epimerization of GDP-D-mannose that precedes the committed step in the biosynthesis of vitamin C (L-ascorbate), resulting in the hydrolysis of the highly energetic glycosyl-pyrophosphoryl linkage. Able to catalyze 2 distinct epimerization reactions and can release both GDP-L-galactose and GDP-L-gulose from GDP-mannose. This is GDP-mannose 3,5-epimerase 2 (GME-2) from Oryza sativa subsp. japonica (Rice).